The following is a 593-amino-acid chain: Translocon at the outer membrane of chloroplasts 64 (593 aa).

Residues 1-4 (MKSM) lie on the Chloroplast intermembrane side of the membrane. A helical transmembrane segment spans residues 5–25 (ASPSSQIWVILGLGLAGIYVL). Residues 26–144 (TRKLTQAVKE…NPAVPNRVPG (119 aa)) lie on the Cytoplasmic side of the membrane. The helical transmembrane segment at 145 to 165 (GSSSGAAVAVAANFVDFSLGV) threads the bilayer. The Chloroplast intermembrane segment spans residues 166 to 403 (DTSGGVRVPA…LSHDYQSRAL (238 aa)). A helical transmembrane segment spans residues 404–424 (SLLSIASISGCCQVTVPLGFF). Topologically, residues 425-593 (DKNPVSVSLI…SAERLRKLFQ (169 aa)) are cytoplasmic. TPR repeat units follow at residues 477–510 (AEISKEKGNQAYKDKQWQKAIGFYTEAIKLCGNN), 511–544 (ATYYSNRAQAYLELGSYLQAEEDCTTAISFDKKN), and 545–578 (VKAYFRRGTAREMLGYYKEAIDDFKYALVLEPTN).

As to quaternary structure, part of the Toc complex and of the intermembrane space complex. Interacts with TOC12, TIC22 and with the cytosolic domain of TOC34 in a GTP dependent manner. Interacts (via TPR region) with HSP90 and with HSP70 with low efficiency.

It localises to the plastid. The protein resides in the chloroplast outer membrane. In terms of biological role, chaperone receptor mediating Hsp90-dependent protein targeting to chloroplasts. Bi-functional preprotein receptor acting on both sides of the membrane. The polypeptide is Translocon at the outer membrane of chloroplasts 64 (TOC64) (Pisum sativum (Garden pea)).